A 133-amino-acid polypeptide reads, in one-letter code: Classical arabinogalactan protein 5 (133 aa).

The N-terminal stretch at 1–21 (MASKSVVVFLFLALVASSVVA) is a signal peptide. The residue at position 22 (glutamine 22) is a Pyrrolidone carboxylic acid. The interval 23–110 (APGPAPTISP…QSPLSGSPNA (88 aa)) is disordered. The segment covering 25-37 (GPAPTISPLPATP) has biased composition (pro residues). The segment covering 38–48 (TPSQSPRATAP) has biased composition (low complexity). Residues 49–81 (APSPSANPPPSAPTTAPPVSQPPTESPPAPPTS) show a composition bias toward pro residues. Asparagine 109 is lipidated: GPI-anchor amidated asparagine. Residues 110-133 (AAAVSRVSLVGTFAGVAVIAALLL) constitute a propeptide, removed in mature form.

This sequence belongs to the classical AGP family. In terms of processing, O-glycosylated on the hydroxyproline residues. Expressed at a low level in flowers and siliques.

It is found in the cell membrane. Its function is as follows. Proteoglycan that seems to be implicated in diverse developmental roles such as differentiation, cell-cell recognition, embryogenesis and programmed cell death. The polypeptide is Classical arabinogalactan protein 5 (AGP5) (Arabidopsis thaliana (Mouse-ear cress)).